Consider the following 226-residue polypeptide: Ribosome-recycling factor, mitochondrial (226 aa).

This sequence belongs to the RRF family.

Its subcellular location is the mitochondrion. Functionally, necessary for protein synthesis in mitochondria. Functions as a ribosome recycling factor in mitochondria. This is Ribosome-recycling factor, mitochondrial (RRF1) from Eremothecium gossypii (strain ATCC 10895 / CBS 109.51 / FGSC 9923 / NRRL Y-1056) (Yeast).